A 280-amino-acid polypeptide reads, in one-letter code: P32 adhesin (280 aa).

2 consecutive transmembrane segments (helical) span residues 13-37 and 68-92; these read FIVL…ALVV and WFIP…AIGL. Over residues 114–128 the composition is skewed to polar residues; it reads EQLQRISDQQEQQTV. 2 disordered regions span residues 114–149 and 163–280; these read EQLQ…QPLQ and FNPN…GLKP. Low complexity-rich tracts occupy residues 132-149 and 168-188; these read PQQS…QPLQ and QQRP…NFNP. Repeat copies occupy residues 163–168, 170–174, 186–190, 191–195, 196–200, 199–204, 206–210, 222–226, 227–231, 232–236, 249–254, 256–260, and 259–264. Residues 163–264 are 6 X 5 AA repeats of [FM]-N-P-N-M-Q; sequence FNPNMQQRPG…QRPGFNPNMQ (102 aa). Residues 170-260 form a 5 X 5 AA repeats of R-P-G-F-N region; it reads RPGFNQPNQQ…PNMQQRPGFN (91 aa). Residues 186-226 form a 2 X 5 AA repeats of F-N-P-R-M region; the sequence is FNPRMNPNMQRPGFNPNMQQRPGFNQPNQQFQPHNNFNPRM. Low complexity predominate over residues 204 to 224; the sequence is QQRPGFNQPNQQFQPHNNFNP. Over residues 235 to 257 the composition is skewed to low complexity; sequence FNQPHPNQFAQPNNFNPNMQQRP. Over residues 261–271 the composition is skewed to polar residues; the sequence is PNMQQRPNPSQ.

The protein localises to the cell projection. The protein resides in the attachment organelle membrane. In terms of biological role, adhesin necessary for successful cytadherence and virulence. This chain is P32 adhesin, found in Mycoplasma genitalium (strain ATCC 33530 / DSM 19775 / NCTC 10195 / G37) (Mycoplasmoides genitalium).